A 121-amino-acid chain; its full sequence is Large ribosomal subunit protein bL21c (121 aa).

Belongs to the bacterial ribosomal protein bL21 family. Part of the 50S ribosomal subunit.

It is found in the plastid. Its subcellular location is the chloroplast. Its function is as follows. This protein binds to 23S rRNA. The chain is Large ribosomal subunit protein bL21c from Huperzia lucidula (Shining clubmoss).